We begin with the raw amino-acid sequence, 412 residues long: Glucose-1-phosphate adenylyltransferase (412 aa).

Residues Gly-163, 179-180 (EK), and Ser-197 contribute to the alpha-D-glucose 1-phosphate site.

This sequence belongs to the bacterial/plant glucose-1-phosphate adenylyltransferase family. As to quaternary structure, homotetramer.

It catalyses the reaction alpha-D-glucose 1-phosphate + ATP + H(+) = ADP-alpha-D-glucose + diphosphate. The protein operates within glycan biosynthesis; glycogen biosynthesis. Functionally, involved in the biosynthesis of ADP-glucose, a building block required for the elongation reactions to produce glycogen. Catalyzes the reaction between ATP and alpha-D-glucose 1-phosphate (G1P) to produce pyrophosphate and ADP-Glc. This is Glucose-1-phosphate adenylyltransferase from Frankia casuarinae (strain DSM 45818 / CECT 9043 / HFP020203 / CcI3).